A 224-amino-acid chain; its full sequence is Beta-casein (224 aa).

Residues 1–15 (MKVLILACLVALALA) form the signal peptide. Phosphoserine is present on residues Ser-30, Ser-32, Ser-33, and Ser-34.

This sequence belongs to the beta-casein family. As to expression, mammary gland specific. Secreted in milk.

It is found in the secreted. Its function is as follows. Important role in determination of the surface properties of the casein micelles. The polypeptide is Beta-casein (CSN2) (Bubalus bubalis (Domestic water buffalo)).